We begin with the raw amino-acid sequence, 351 residues long: Fructose-1,6-bisphosphatase class 1 (351 aa).

Mg(2+) is bound by residues Glu-94, Asp-113, Leu-115, and Asp-116. Residues 116–119 and Asn-207 contribute to the substrate site; that span reads DGSS. Glu-279 contributes to the Mg(2+) binding site.

This sequence belongs to the FBPase class 1 family. Homotetramer. It depends on Mg(2+) as a cofactor.

It localises to the cytoplasm. It carries out the reaction beta-D-fructose 1,6-bisphosphate + H2O = beta-D-fructose 6-phosphate + phosphate. It participates in carbohydrate biosynthesis; gluconeogenesis. The sequence is that of Fructose-1,6-bisphosphatase class 1 from Methylobacterium radiotolerans (strain ATCC 27329 / DSM 1819 / JCM 2831 / NBRC 15690 / NCIMB 10815 / 0-1).